We begin with the raw amino-acid sequence, 465 residues long: Sensor histidine kinase ZraS (465 aa).

At 1–14 (MSFIRLHKDAAAMW) the chain is on the cytoplasmic side. A helical membrane pass occupies residues 15–35 (LSRLLPAAIFILVGLFSIMVI). Residues 36–203 (RDYGRESAAA…ATQAREWRNT (168 aa)) lie on the Periplasmic side of the membrane. The chain crosses the membrane as a helical span at residues 204 to 224 (LIVLSALAAVLLATLLAFFWY). Over 225–465 (QRYQRSHREL…WLPVIARQQD (241 aa)) the chain is Cytoplasmic. Residues 253–461 (GVAHEIRNPL…VFTIWLPVIA (209 aa)) form the Histidine kinase domain. His256 bears the Phosphohistidine; by autocatalysis mark.

In terms of processing, autophosphorylated.

It localises to the cell inner membrane. The enzyme catalyses ATP + protein L-histidine = ADP + protein N-phospho-L-histidine.. With respect to regulation, activity of the ZraS/ZraR two-component system is repressed by the zinc-bound form of ZraP, which probably interacts with the periplasmic region of ZraS. Its function is as follows. Part of the Zra signaling pathway, an envelope stress response (ESR) system composed of the periplasmic accessory protein ZraP, the histidine kinase ZraS and the transcriptional regulator ZraR. The ZraPSR system contributes to antibiotic resistance and is important for membrane integrity in the presence of membrane-targeting biocides. ZraS is a member of the two-component regulatory system ZraS/ZraR. Functions as a membrane-associated sensor kinase that phosphorylates ZraR in response to high concentrations of Zn(2+) or Pb(2+) in the medium. This chain is Sensor histidine kinase ZraS (zraS), found in Salmonella typhi.